The primary structure comprises 134 residues: uncharacterized protein (134 aa).

It to E.coli YbcV and YdfO.

This is an uncharacterized protein from Escherichia coli (strain K12).